We begin with the raw amino-acid sequence, 427 residues long: 3-phosphoshikimate 1-carboxyvinyltransferase (427 aa).

The 3-phosphoshikimate site is built by Lys22, Ser23, and Arg27. Lys22 is a binding site for phosphoenolpyruvate. Gly94 and Arg122 together coordinate phosphoenolpyruvate. Positions 165, 167, 313, and 340 each coordinate 3-phosphoshikimate. Gln167 is a phosphoenolpyruvate binding site. Catalysis depends on Asp313, which acts as the Proton acceptor. Positions 344 and 386 each coordinate phosphoenolpyruvate.

Belongs to the EPSP synthase family. Monomer.

It is found in the cytoplasm. The enzyme catalyses 3-phosphoshikimate + phosphoenolpyruvate = 5-O-(1-carboxyvinyl)-3-phosphoshikimate + phosphate. It participates in metabolic intermediate biosynthesis; chorismate biosynthesis; chorismate from D-erythrose 4-phosphate and phosphoenolpyruvate: step 6/7. In terms of biological role, catalyzes the transfer of the enolpyruvyl moiety of phosphoenolpyruvate (PEP) to the 5-hydroxyl of shikimate-3-phosphate (S3P) to produce enolpyruvyl shikimate-3-phosphate and inorganic phosphate. This Koribacter versatilis (strain Ellin345) protein is 3-phosphoshikimate 1-carboxyvinyltransferase.